A 209-amino-acid chain; its full sequence is Kynurenine formamidase (209 aa).

Tryptophan 18 serves as a coordination point for substrate. Positions 48, 52, and 54 each coordinate Zn(2+). Histidine 58 functions as the Proton donor/acceptor in the catalytic mechanism. Zn(2+) is bound by residues histidine 160 and glutamate 172.

It belongs to the Cyclase 1 superfamily. KynB family. Homodimer. Requires Zn(2+) as cofactor.

The enzyme catalyses N-formyl-L-kynurenine + H2O = L-kynurenine + formate + H(+). Its pathway is amino-acid degradation; L-tryptophan degradation via kynurenine pathway; L-kynurenine from L-tryptophan: step 2/2. Functionally, catalyzes the hydrolysis of N-formyl-L-kynurenine to L-kynurenine, the second step in the kynurenine pathway of tryptophan degradation. The protein is Kynurenine formamidase of Sphingopyxis alaskensis (strain DSM 13593 / LMG 18877 / RB2256) (Sphingomonas alaskensis).